A 282-amino-acid chain; its full sequence is Pantothenate synthetase (282 aa).

Position 30–37 (30–37) interacts with ATP; sequence MGNLHLGH. The active-site Proton donor is His37. (R)-pantoate is bound at residue Gln61. Gln61 contacts beta-alanine. 149-152 contributes to the ATP binding site; sequence GQKD. Position 155 (Gln155) interacts with (R)-pantoate. ATP contacts are provided by residues Ile178 and 186–189; that span reads MSSR.

It belongs to the pantothenate synthetase family. Homodimer.

It localises to the cytoplasm. It catalyses the reaction (R)-pantoate + beta-alanine + ATP = (R)-pantothenate + AMP + diphosphate + H(+). The protein operates within cofactor biosynthesis; (R)-pantothenate biosynthesis; (R)-pantothenate from (R)-pantoate and beta-alanine: step 1/1. In terms of biological role, catalyzes the condensation of pantoate with beta-alanine in an ATP-dependent reaction via a pantoyl-adenylate intermediate. The chain is Pantothenate synthetase from Shewanella piezotolerans (strain WP3 / JCM 13877).